We begin with the raw amino-acid sequence, 399 residues long: L-asparaginase-like protein GG20738 (399 aa).

The signal sequence occupies residues 1–22 (MLAQSCCLRLLILLLLCKSTCS). 3 disulfides stabilise this stretch: Cys90–Cys95, Cys189–Cys205, and Cys344–Cys371.

This sequence belongs to the Ntn-hydrolase family.

The polypeptide is L-asparaginase-like protein GG20738 (Drosophila erecta (Fruit fly)).